A 159-amino-acid chain; its full sequence is MSQDPVIIHTDGGCRPNPGPGGWGAVLRHREHVREMFGGEAAVTSNNRMELTAPIMALEALTRPVTVHLYTDSTYVRNGITKWVLGWERNGWMTAAKQPVKNVDLWQRLQAACARHQVEWFWVKGHSGIGDNELADELATRGLQEAVGLTTSSAGTSLR.

An RNase H type-1 domain is found at 2–144 (SQDPVIIHTD…ADELATRGLQ (143 aa)). Mg(2+) contacts are provided by Asp11, Glu50, Asp72, and Asp136.

Belongs to the RNase H family. Monomer. Mg(2+) is required as a cofactor.

It localises to the cytoplasm. It carries out the reaction Endonucleolytic cleavage to 5'-phosphomonoester.. Functionally, endonuclease that specifically degrades the RNA of RNA-DNA hybrids. This Mycolicibacterium smegmatis (strain ATCC 700084 / mc(2)155) (Mycobacterium smegmatis) protein is Ribonuclease H.